Reading from the N-terminus, the 702-residue chain is Vertnin (702 aa).

The interval 562–625 is disordered; the sequence is VPTLGKGGQE…QGQPHSGPLL (64 aa). Over residues 570-582 the composition is skewed to basic and acidic residues; that stretch reads QEAEEKQEKEAGR.

The protein belongs to the vertnin family.

It localises to the nucleus. Functionally, acts as a transcription factor that regulates development of thoracic vertebrae. This is Vertnin from Homo sapiens (Human).